Reading from the N-terminus, the 238-residue chain is Ribonuclease PH (238 aa).

Phosphate contacts are provided by residues arginine 86 and 124 to 126; that span reads GTR.

This sequence belongs to the RNase PH family. In terms of assembly, homohexameric ring arranged as a trimer of dimers.

The catalysed reaction is tRNA(n+1) + phosphate = tRNA(n) + a ribonucleoside 5'-diphosphate. Its function is as follows. Phosphorolytic 3'-5' exoribonuclease that plays an important role in tRNA 3'-end maturation. Removes nucleotide residues following the 3'-CCA terminus of tRNAs; can also add nucleotides to the ends of RNA molecules by using nucleoside diphosphates as substrates, but this may not be physiologically important. Probably plays a role in initiation of 16S rRNA degradation (leading to ribosome degradation) during starvation. In Mannheimia haemolytica (Pasteurella haemolytica), this protein is Ribonuclease PH.